The chain runs to 328 residues: Reticulocalbin-3 (328 aa).

The signal sequence occupies residues 1–20 (MMWRWSFLLLLLLLRHWALG). The interval 24-48 (PDAGPHGQDRVHHGTPLSEAPHDDA) is disordered. EF-hand domains follow at residues 77–112 (QARL…TQQR), 113–148 (HIRD…HYEP), 163–198 (KMLA…EEFP), 200–235 (MRDI…EEPG), 241–276 (WVQT…PSQD), and 277–312 (QPLV…FVGS). Residues Asp-92, Asp-94, Trp-96, Glu-101, Asp-126, Asp-128, Asp-130, Arg-132, and Glu-137 each contribute to the Ca(2+) site. Residue Asn-140 is glycosylated (N-linked (GlcNAc...) asparagine). The Ca(2+) site is built by Asp-176, Asp-178, Asp-180, Met-182, Glu-187, Asp-213, Asn-215, Asp-217, Tyr-219, Glu-224, Asp-254, Asn-256, Asp-258, Arg-260, Glu-265, Asp-290, Asp-292, Asp-294, Arg-296, and Glu-301. The Prevents secretion from ER motif lies at 325-328 (HDEL).

This sequence belongs to the CREC family. Interacts with PCSK6 (immature form including the propeptide); probably involved in the maturation and the secretion of PCSK6. In terms of processing, degraded by PCSK6 and other endoproteases including FURIN and PCSK5. N-glycosylated. As to expression, highly expressed in lung and heart. Also detected in liver, spleen, kidney, skeletal muscle, intestine, stomach, and brain.

It is found in the endoplasmic reticulum lumen. Probable molecular chaperone assisting protein biosynthesis and transport in the endoplasmic reticulum. Required for the proper biosynthesis and transport of pulmonary surfactant-associated protein A/SP-A, pulmonary surfactant-associated protein D/SP-D and the lipid transporter ABCA3. By regulating both the proper expression and the degradation through the endoplasmic reticulum-associated protein degradation pathway of these proteins plays a crucial role in pulmonary surfactant homeostasis. Has an anti-fibrotic activity by negatively regulating the secretion of type I and type III collagens. This calcium-binding protein also transiently associates with immature PCSK6 and regulates its secretion. This Mus musculus (Mouse) protein is Reticulocalbin-3.